An 880-amino-acid polypeptide reads, in one-letter code: MNFQFYFLIKHNFISCKLETPLQLLLTTYVNLLKHKKNIIPLNVDKARDVYRAHENSYFLDHYIRSNQATCITQRPSVKLGEWVQKGDFLCDTTASSAGELALGKNILVAYMPWHGYNFEDAILVNETLIIYDIYTSLHLEKFEIEIENTNWGPEIIKLSDWMFSDKRDSLYGKELFTQETTKQTYVKEKQITIGVLKQAFLRRKGKLLINRRFISKIHKYEFLTNQRFVVPQFRYQQTLFQQINKNPKKQLISRSIIENSNQLSIYNKPKIRFTNNVISSKLFKPLIIFSQVTLLNILSQCHIDKSQYQPTSELLSSKLVAKEQIHELLFKQPKKTGVKIKLKHGTSHTTDFYNKDLLSNTKMRAGGENHRPGESKIYLGSKASVKFINMNFQEKKTNGYKKISLYNNKTSSQNNVNKKSFFLFLNKSILFLNKPRPKYKSTRPVNVSLNKSAFIYRRSFRTLFPYNFKNMRLSCEKLFVNNNNWLINYIKSLDVVIGGEIYRPGNKLQINLEYLNFKYGFVQKNNYDHLDNDGIIKLGTWVKPGDIIVSKLRPIGPHNPTPLEKLVAAILKKKFDDYKNAAFYTPKDVYGRIVGIEILEPKNLPSDVEYSGIGRVEFYLVDKRRIFVGDKMAGRHGNKGIISNILPKQDMPYLPDGTPVDMVLNPLGVPSRMNVGQVFETLLGLAGKYLHQHFKVTPFDEVYGPEASRSLVYSKLYEARLKTDQNWIFDPKSPGKTRIFDGQTGANFDQAVTAGYAYMLKLIHLVDHKIHARSTGPYALVTQQPVRGRSRAGGQRLGEMEFWALEAFGASYNLQEMMTIKSDDILGRTQVFDSILNSKPIQNSHPESFRVFINELRSLGVNFQSQILHQYNPNIKTKI.

It belongs to the RNA polymerase beta chain family. In terms of assembly, in plastids the minimal PEP RNA polymerase catalytic core is composed of four subunits: alpha, beta, beta', and beta''. When a (nuclear-encoded) sigma factor is associated with the core the holoenzyme is formed, which can initiate transcription.

Its subcellular location is the plastid. It localises to the chloroplast. It catalyses the reaction RNA(n) + a ribonucleoside 5'-triphosphate = RNA(n+1) + diphosphate. Functionally, DNA-dependent RNA polymerase catalyzes the transcription of DNA into RNA using the four ribonucleoside triphosphates as substrates. This Pleurastrum terricola (Filamentous green alga) protein is DNA-directed RNA polymerase subunit beta C-terminal section (rpoB2).